Consider the following 422-residue polypeptide: Serine--tRNA ligase (422 aa).

231–233 (TGE) serves as a coordination point for L-serine. 262-264 (RQE) is a binding site for ATP. An L-serine-binding site is contributed by Glu-285. Residue 349–352 (EISS) participates in ATP binding. L-serine is bound at residue Ser-384.

The protein belongs to the class-II aminoacyl-tRNA synthetase family. Type-1 seryl-tRNA synthetase subfamily. Homodimer. The tRNA molecule binds across the dimer.

Its subcellular location is the cytoplasm. It carries out the reaction tRNA(Ser) + L-serine + ATP = L-seryl-tRNA(Ser) + AMP + diphosphate + H(+). The enzyme catalyses tRNA(Sec) + L-serine + ATP = L-seryl-tRNA(Sec) + AMP + diphosphate + H(+). The protein operates within aminoacyl-tRNA biosynthesis; selenocysteinyl-tRNA(Sec) biosynthesis; L-seryl-tRNA(Sec) from L-serine and tRNA(Sec): step 1/1. In terms of biological role, catalyzes the attachment of serine to tRNA(Ser). Is also able to aminoacylate tRNA(Sec) with serine, to form the misacylated tRNA L-seryl-tRNA(Sec), which will be further converted into selenocysteinyl-tRNA(Sec). The sequence is that of Serine--tRNA ligase from Mesoplasma florum (strain ATCC 33453 / NBRC 100688 / NCTC 11704 / L1) (Acholeplasma florum).